A 399-amino-acid polypeptide reads, in one-letter code: MYLEHLSLTDFRSYAQVDLKLGPGVTVLVGSNGIGKTNLMEAIGYLATLSSHRVSTDAPLLRFGTERALIRAKLVRGEQSTVIELEINAGRANRGRINRSNPVRARDILGICQTVLFAPEDLALVKGDPSNRRRFLDELLVSLVPRHAATRSDYDRVLKQRNALLKSARTGKFTAGHEATLDVWDQHMARAGAELLHARLELVERLRPHLNSAYAQLTDASKDAGAVYRSTIQGVLDDDGGPTDHGTEPSPSVDDLRLLSVDELTERYVQAFAASRKKELERGISLVGPHRDELELVLGQAPAKGYASHGETWSMCLSLRLASYYVMLDDARTGGTAPILILILDDVFAELDVHRRRKLAAIVAGAEQVLVTAAVDADIPEELAGRRVTVVPGGIDGEG.

30 to 37 (GSNGIGKT) serves as a coordination point for ATP.

The protein belongs to the RecF family.

Its subcellular location is the cytoplasm. Functionally, the RecF protein is involved in DNA metabolism; it is required for DNA replication and normal SOS inducibility. RecF binds preferentially to single-stranded, linear DNA. It also seems to bind ATP. In Paenarthrobacter aurescens (strain TC1), this protein is DNA replication and repair protein RecF.